The chain runs to 168 residues: Phosphopantetheine adenylyltransferase (168 aa).

Position 17 (Thr17) interacts with substrate. Residues 17-18 and His25 contribute to the ATP site; that span reads TF. Substrate contacts are provided by Lys49, Leu81, and Arg95. ATP-binding positions include 96–98, Glu106, and 131–137; these read GLR and LMYISST.

This sequence belongs to the bacterial CoaD family. Homohexamer. Mg(2+) is required as a cofactor.

The protein localises to the cytoplasm. The catalysed reaction is (R)-4'-phosphopantetheine + ATP + H(+) = 3'-dephospho-CoA + diphosphate. It participates in cofactor biosynthesis; coenzyme A biosynthesis; CoA from (R)-pantothenate: step 4/5. Reversibly transfers an adenylyl group from ATP to 4'-phosphopantetheine, yielding dephospho-CoA (dPCoA) and pyrophosphate. The sequence is that of Phosphopantetheine adenylyltransferase from Legionella pneumophila (strain Paris).